The chain runs to 141 residues: Large ribosomal subunit protein bL17 (141 aa).

The protein belongs to the bacterial ribosomal protein bL17 family. In terms of assembly, part of the 50S ribosomal subunit. Contacts protein L32.

The chain is Large ribosomal subunit protein bL17 from Allorhizobium ampelinum (strain ATCC BAA-846 / DSM 112012 / S4) (Agrobacterium vitis (strain S4)).